The sequence spans 144 residues: Large ribosomal subunit protein uL15 (144 aa).

Residues 1 to 57 are disordered; that stretch reads MKLNDLSPAPGSRREKHRPGRGIGSGLGKTGGRGHKGQTSRSGGSIAPGFEGGQQPL. The segment covering 21–31 has biased composition (gly residues); that stretch reads RGIGSGLGKTG.

This sequence belongs to the universal ribosomal protein uL15 family. In terms of assembly, part of the 50S ribosomal subunit.

Functionally, binds to the 23S rRNA. The polypeptide is Large ribosomal subunit protein uL15 (Pseudomonas putida (strain ATCC 700007 / DSM 6899 / JCM 31910 / BCRC 17059 / LMG 24140 / F1)).